The sequence spans 161 residues: ATP synthase subunit b 1 (161 aa).

A helical membrane pass occupies residues 6–26; that stretch reads ETWVAIAFVILMVVFGYLGVF.

The protein belongs to the ATPase B chain family. In terms of assembly, F-type ATPases have 2 components, F(1) - the catalytic core - and F(0) - the membrane proton channel. F(1) has five subunits: alpha(3), beta(3), gamma(1), delta(1), epsilon(1). F(0) has three main subunits: a(1), b(2) and c(10-14). The alpha and beta chains form an alternating ring which encloses part of the gamma chain. F(1) is attached to F(0) by a central stalk formed by the gamma and epsilon chains, while a peripheral stalk is formed by the delta and b chains.

The protein resides in the cell inner membrane. F(1)F(0) ATP synthase produces ATP from ADP in the presence of a proton or sodium gradient. F-type ATPases consist of two structural domains, F(1) containing the extramembraneous catalytic core and F(0) containing the membrane proton channel, linked together by a central stalk and a peripheral stalk. During catalysis, ATP synthesis in the catalytic domain of F(1) is coupled via a rotary mechanism of the central stalk subunits to proton translocation. Functionally, component of the F(0) channel, it forms part of the peripheral stalk, linking F(1) to F(0). The protein is ATP synthase subunit b 1 of Bradyrhizobium diazoefficiens (strain JCM 10833 / BCRC 13528 / IAM 13628 / NBRC 14792 / USDA 110).